A 435-amino-acid chain; its full sequence is GTPase Der (435 aa).

EngA-type G domains are found at residues 4–167 and 175–350; these read PVVA…PAEK and ISFS…DNQN. GTP contacts are provided by residues 10–17, 57–61, 119–122, 181–188, 228–232, and 293–296; these read GQPNVGKS, DTGGI, NKAD, GRPNVGKS, DTAGI, and NKWD. Residues 351-435 form the KH-like domain; sequence QRIQSSVLND…PIKILPRKRK (85 aa).

The protein belongs to the TRAFAC class TrmE-Era-EngA-EngB-Septin-like GTPase superfamily. EngA (Der) GTPase family. In terms of assembly, associates with the 50S ribosomal subunit.

Its function is as follows. GTPase that plays an essential role in the late steps of ribosome biogenesis. This is GTPase Der from Lactobacillus helveticus (strain DPC 4571).